A 150-amino-acid polypeptide reads, in one-letter code: 3-dehydroquinate dehydratase (150 aa).

Catalysis depends on Y26, which acts as the Proton acceptor. N77, H83, and D90 together coordinate substrate. H103 serves as the catalytic Proton donor. Substrate-binding positions include 104-105 and R114; that span reads LS.

The protein belongs to the type-II 3-dehydroquinase family. Homododecamer.

It catalyses the reaction 3-dehydroquinate = 3-dehydroshikimate + H2O. It participates in metabolic intermediate biosynthesis; chorismate biosynthesis; chorismate from D-erythrose 4-phosphate and phosphoenolpyruvate: step 3/7. Catalyzes a trans-dehydration via an enolate intermediate. The polypeptide is 3-dehydroquinate dehydratase (Pectobacterium atrosepticum (strain SCRI 1043 / ATCC BAA-672) (Erwinia carotovora subsp. atroseptica)).